Consider the following 498-residue polypeptide: Protein MGF 505-5R (498 aa).

This sequence belongs to the asfivirus MGF 505 family.

Plays a role in virus cell tropism, and may be required for efficient virus replication in macrophages. The chain is Protein MGF 505-5R from Ornithodoros (relapsing fever ticks).